Consider the following 563-residue polypeptide: Cystathionine gamma-synthase 1, chloroplastic (563 aa).

A chloroplast-targeting transit peptide spans 1-68 (MAVSSFQCPT…SRILRFPPNF (68 aa)). 7 residues coordinate pyridoxal 5'-phosphate: Tyr-226, Arg-228, Gly-256, Met-257, Tyr-281, Ser-376, and Thr-378. The residue at position 379 (Lys-379) is an N6-(pyridoxal phosphate)lysine.

The protein belongs to the trans-sulfuration enzymes family. Requires pyridoxal 5'-phosphate as cofactor.

It is found in the plastid. It localises to the chloroplast. The enzyme catalyses O-phospho-L-homoserine + L-cysteine = L,L-cystathionine + phosphate. It carries out the reaction O-succinyl-L-homoserine + L-cysteine = L,L-cystathionine + succinate + H(+). It participates in amino-acid biosynthesis; L-methionine biosynthesis via de novo pathway; L-cystathionine from O-succinyl-L-homoserine: step 1/1. With respect to regulation, inhibited by propargylglycine. Functionally, catalyzes the first committed step of methionine (Met) biosynthesis. Catalyzes the formation of L-cystathionine from homoserine esters and L-cysteine, via a gamma-replacement reaction. Substrate preference for cystathionine synthesis is O-phospho-L-homoserine (OPH) &gt; O(4)-succinyl-L-homoserine (OSH) &gt;&gt; O-acetyl-L-homoserine (OAH). Is able, at extremely low rate, to catalyze a gamma-elimination of OPH in the absence of cysteine to produce inorganic phosphate (Pi), 2-oxobutanoate and ammonia. This is Cystathionine gamma-synthase 1, chloroplastic from Arabidopsis thaliana (Mouse-ear cress).